We begin with the raw amino-acid sequence, 398 residues long: Putative F-box protein At1g67450 (398 aa).

The 55-residue stretch at T2–F56 folds into the F-box domain.

The protein is Putative F-box protein At1g67450 of Arabidopsis thaliana (Mouse-ear cress).